We begin with the raw amino-acid sequence, 288 residues long: Polyamine aminopropyltransferase (288 aa).

Residues 9 to 238 (ETLHDQFGQY…GIMTFAWATD (230 aa)) enclose the PABS domain. Gln-33 contacts S-methyl-5'-thioadenosine. The spermidine site is built by His-64 and Asp-88. Residues Glu-108 and 140–141 (DG) contribute to the S-methyl-5'-thioadenosine site. The active-site Proton acceptor is the Asp-158. 158–161 (DCTD) is a spermidine binding site. S-methyl-5'-thioadenosine is bound at residue Pro-165.

The protein belongs to the spermidine/spermine synthase family. As to quaternary structure, homodimer or homotetramer.

Its subcellular location is the cytoplasm. It carries out the reaction S-adenosyl 3-(methylsulfanyl)propylamine + putrescine = S-methyl-5'-thioadenosine + spermidine + H(+). It participates in amine and polyamine biosynthesis; spermidine biosynthesis; spermidine from putrescine: step 1/1. Functionally, catalyzes the irreversible transfer of a propylamine group from the amino donor S-adenosylmethioninamine (decarboxy-AdoMet) to putrescine (1,4-diaminobutane) to yield spermidine. The protein is Polyamine aminopropyltransferase of Escherichia coli (strain UTI89 / UPEC).